Consider the following 1135-residue polypeptide: uncharacterized protein (1135 aa).

Positions 1 to 28 (MALFPRGILIALVLSFVLNLGLVTKIHA) are cleaved as a signal peptide. Transmembrane regions (helical) follow at residues 332 to 352 (IVTA…LLAG), 359 to 379 (EYIN…GINI), 393 to 413 (MIQW…NWVM), 495 to 515 (MLVS…AFMV), 522 to 542 (MISI…FLFA), 555 to 575 (MISF…MFAV), and 700 to 720 (IKNI…MYNF).

Belongs to the TrbL/VirB6 family.

The protein localises to the cell membrane. This is an uncharacterized protein from Rickettsia typhi (strain ATCC VR-144 / Wilmington).